The sequence spans 356 residues: UDP-N-acetylenolpyruvoylglucosamine reductase (356 aa).

Residues 19–227 enclose the FAD-binding PCMH-type domain; it reads LGGPAARFCS…RDAVLSLRRS (209 aa). The active site involves Arg167. Catalysis depends on Ser244, which acts as the Proton donor. The active site involves Glu348.

It belongs to the MurB family. Requires FAD as cofactor.

The protein localises to the cytoplasm. The enzyme catalyses UDP-N-acetyl-alpha-D-muramate + NADP(+) = UDP-N-acetyl-3-O-(1-carboxyvinyl)-alpha-D-glucosamine + NADPH + H(+). It functions in the pathway cell wall biogenesis; peptidoglycan biosynthesis. Its function is as follows. Cell wall formation. The polypeptide is UDP-N-acetylenolpyruvoylglucosamine reductase (Thermobifida fusca (strain YX)).